The sequence spans 177 residues: ATP synthase subunit delta (177 aa).

It belongs to the ATPase delta chain family. In terms of assembly, F-type ATPases have 2 components, F(1) - the catalytic core - and F(0) - the membrane proton channel. F(1) has five subunits: alpha(3), beta(3), gamma(1), delta(1), epsilon(1). F(0) has three main subunits: a(1), b(2) and c(10-14). The alpha and beta chains form an alternating ring which encloses part of the gamma chain. F(1) is attached to F(0) by a central stalk formed by the gamma and epsilon chains, while a peripheral stalk is formed by the delta and b chains.

The protein resides in the cell inner membrane. In terms of biological role, f(1)F(0) ATP synthase produces ATP from ADP in the presence of a proton or sodium gradient. F-type ATPases consist of two structural domains, F(1) containing the extramembraneous catalytic core and F(0) containing the membrane proton channel, linked together by a central stalk and a peripheral stalk. During catalysis, ATP synthesis in the catalytic domain of F(1) is coupled via a rotary mechanism of the central stalk subunits to proton translocation. Functionally, this protein is part of the stalk that links CF(0) to CF(1). It either transmits conformational changes from CF(0) to CF(1) or is implicated in proton conduction. This is ATP synthase subunit delta from Flavobacterium johnsoniae (strain ATCC 17061 / DSM 2064 / JCM 8514 / BCRC 14874 / CCUG 350202 / NBRC 14942 / NCIMB 11054 / UW101) (Cytophaga johnsonae).